A 401-amino-acid chain; its full sequence is Chalcone synthase 1 (401 aa).

Cys-168 is a catalytic residue.

Belongs to the thiolase-like superfamily. Chalcone/stilbene synthases family.

It carries out the reaction (E)-4-coumaroyl-CoA + 3 malonyl-CoA + 3 H(+) = 2',4,4',6'-tetrahydroxychalcone + 3 CO2 + 4 CoA. It participates in secondary metabolite biosynthesis; flavonoid biosynthesis. The primary product of this enzyme is 4,2',4',6'-tetrahydroxychalcone (also termed naringenin-chalcone or chalcone) which can under specific conditions spontaneously isomerize into naringenin. In Sorghum bicolor (Sorghum), this protein is Chalcone synthase 1 (CHS1).